Here is a 475-residue protein sequence, read N- to C-terminus: Ribulose bisphosphate carboxylase large chain (475 aa).

Positions Met1–Ser2 are excised as a propeptide. Pro3 is modified (N-acetylproline). Lys14 carries the post-translational modification N6,N6,N6-trimethyllysine. Substrate is bound by residues Asn123 and Thr173. Lys175 (proton acceptor) is an active-site residue. Lys177 contacts substrate. The Mg(2+) site is built by Lys201, Asp203, and Glu204. At Lys201 the chain carries N6-carboxylysine. His294 functions as the Proton acceptor in the catalytic mechanism. Arg295, His327, and Ser379 together coordinate substrate.

The protein belongs to the RuBisCO large chain family. Type I subfamily. As to quaternary structure, heterohexadecamer of 8 large chains and 8 small chains; disulfide-linked. The disulfide link is formed within the large subunit homodimers. Mg(2+) is required as a cofactor. The disulfide bond which can form in the large chain dimeric partners within the hexadecamer appears to be associated with oxidative stress and protein turnover.

The protein resides in the plastid. The protein localises to the chloroplast. It catalyses the reaction 2 (2R)-3-phosphoglycerate + 2 H(+) = D-ribulose 1,5-bisphosphate + CO2 + H2O. It carries out the reaction D-ribulose 1,5-bisphosphate + O2 = 2-phosphoglycolate + (2R)-3-phosphoglycerate + 2 H(+). In terms of biological role, ruBisCO catalyzes two reactions: the carboxylation of D-ribulose 1,5-bisphosphate, the primary event in carbon dioxide fixation, as well as the oxidative fragmentation of the pentose substrate in the photorespiration process. Both reactions occur simultaneously and in competition at the same active site. In Populus tremuloides (Quaking aspen), this protein is Ribulose bisphosphate carboxylase large chain.